The following is a 2849-amino-acid chain: Immunoglobulin-like and fibronectin type III domain-containing protein 1 (2849 aa).

The tract at residues 82-108 (AGSAARPDGSGSESLAASSSWKPRRRL) is disordered. Over residues 90-101 (GSGSESLAASSS) the composition is skewed to low complexity. In terms of domain architecture, Ig-like 1 spans 187–277 (PDFKQKPVTL…GEATCSVRLT (91 aa)). Residues 347-380 (IVDFRGMLRKLQEMKKEQEDRMAQYVSAIANLRH) are a coiled coil. Residues 468–557 (PRVVVPLAET…SSAWLVVEGG (90 aa)) form the Ig-like 2 domain. Disordered regions lie at residues 577–600 (LASEAEDAGGISIKGGQSRERGSL), 652–760 (VTLP…AGQR), 864–924 (YPGQ…DLRS), 962–981 (VGQREAGKPGGAEYEDIGPQ), 1061–1103 (EEEF…EGMA), 1221–1258 (TVGSVGGHGRKDSGTAGKVGEGYTEAEPGHSGGLSSWG), 1312–1338 (STVGTGNWDKARHPGAPSPHEAGSEGH), 1350–1384 (RDGSGIPEPWSAGDKTAYGEESKGLGPERTGPDGE), 1498–1523 (ETGRMESKNGVGYRGSSVGPGEMGSE), 1654–1675 (EWKDDSGFQGSLRDRGTPSEEI), 1724–1780 (QQGV…ATSH), and 1827–2055 (GAAG…SMDH). Over residues 717–742 (HPRDRRLESRGEGQEHSEGHGSELDR) the composition is skewed to basic and acidic residues. The segment covering 866–880 (GQTSEGNDTQKSSLS) has biased composition (polar residues). A compositionally biased stretch (gly residues) spans 1070-1084 (RSQGKGSRGGMGLGG). Over residues 1873–1882 (SKPQEPQNEL) the composition is skewed to polar residues. 2 stretches are compositionally biased toward basic and acidic residues: residues 1988 to 2004 (SEDRGSLREPWSEDRRQ) and 2012 to 2021 (SRRDTQEGRS). The 104-residue stretch at 2034 to 2137 (PRSRYQPGTG…GCQHSEASLT (104 aa)) folds into the Ig-like 3 domain. Fibronectin type-III domains are found at residues 2244–2339 (PPQG…VAPE), 2344–2443 (PPSA…MRPP), and 2445–2540 (PVRD…AMPA). The region spanning 2544-2628 (PRFLMDSGTK…LRNLQGKEAT (85 aa)) is the Ig-like 4 domain. The Fibronectin type-III 4 domain occupies 2641 to 2735 (APGSIYLQEN…TSQPWCIPRQ (95 aa)). The region spanning 2749–2845 (PDLSQKPRFL…AVSTATLIVT (97 aa)) is the Ig-like 5 domain.

As to quaternary structure, interacts with FLNC. Interacts with KY. In terms of tissue distribution, isoform 1, isoform 3 and isoform 4 are expressed in skeletal muscle while isoform 2 is detected in both skeletal muscle and heart (at protein level).

The protein localises to the nucleus. The protein resides in the cytoplasm. It is found in the myofibril. Its subcellular location is the sarcomere. It localises to the z line. The chain is Immunoglobulin-like and fibronectin type III domain-containing protein 1 (Igfn1) from Mus musculus (Mouse).